The sequence spans 228 residues: Urease accessory protein UreF (228 aa).

Belongs to the UreF family. As to quaternary structure, ureD, UreF and UreG form a complex that acts as a GTP-hydrolysis-dependent molecular chaperone, activating the urease apoprotein by helping to assemble the nickel containing metallocenter of UreC. The UreE protein probably delivers the nickel.

The protein resides in the cytoplasm. Its function is as follows. Required for maturation of urease via the functional incorporation of the urease nickel metallocenter. This Yersinia pseudotuberculosis serotype IB (strain PB1/+) protein is Urease accessory protein UreF.